Here is a 128-residue protein sequence, read N- to C-terminus: Large ribosomal subunit protein bL12 (128 aa).

Belongs to the bacterial ribosomal protein bL12 family. As to quaternary structure, homodimer. Part of the ribosomal stalk of the 50S ribosomal subunit. Forms a multimeric L10(L12)X complex, where L10 forms an elongated spine to which 2 to 4 L12 dimers bind in a sequential fashion. Binds GTP-bound translation factors.

Functionally, forms part of the ribosomal stalk which helps the ribosome interact with GTP-bound translation factors. Is thus essential for accurate translation. The chain is Large ribosomal subunit protein bL12 from Aquifex aeolicus (strain VF5).